The sequence spans 327 residues: Solute-binding protein SPO1773 (327 aa).

The first 26 residues, 1-26 (MTISFKGLARGVACAALVLAALPAAA), serve as a signal peptide directing secretion. 3-hydroxybenzoate contacts are provided by residues 39–41 (HTW), arginine 150, 170–172 (RIT), and aspartate 211.

This sequence belongs to the bacterial solute-binding protein 7 family. In terms of assembly, the complex is comprised of an extracytoplasmic solute-binding protein and a heteromeric permease formed by two transmembrane proteins.

It localises to the periplasm. Functionally, solute-binding protein that binds 3,4-dihydroxybenzoate and 3-hydroxybenzoate (in vitro). Probably part of a tripartite ATP-independent periplasmic (TRAP) transport system that mediates solute transport into the cytoplasm. This is Solute-binding protein SPO1773 from Ruegeria pomeroyi (strain ATCC 700808 / DSM 15171 / DSS-3) (Silicibacter pomeroyi).